A 238-amino-acid chain; its full sequence is Cysteine-rich venom protein (238 aa).

The first 19 residues, 1 to 19 (MIAFIVLLSLAAVLQQSSG), serve as a signal peptide directing secretion. A propeptide spanning residues 20 to 27 (TVDFASES) is cleaved from the precursor. In terms of domain architecture, SCP spans 39–164 (KKHNALRRSV…PTKYLYVCQY (126 aa)). 8 disulfides stabilise this stretch: cysteine 75/cysteine 153, cysteine 92/cysteine 165, cysteine 148/cysteine 162, cysteine 184/cysteine 191, cysteine 187/cysteine 196, cysteine 200/cysteine 233, cysteine 209/cysteine 227, and cysteine 218/cysteine 231. Residues 200–233 (CKREDDYSNCKSLAEKNKCMEEWMKSKCPASCFC) enclose the ShKT domain.

It belongs to the CRISP family. In terms of tissue distribution, expressed by the venom gland.

It localises to the secreted. Functionally, blocks olfactory (CNGA2) and retinal (CNGA1) cyclic nucleotide-gated (CNG) ion channel currents. Does not inhibit retinal (CNGA3) currents. It forms high-affinity contacts with the pore turret region and most likely inhibits CNG channel current by blocking the external entrance to the transmembrane pore. Does not affect neither depolarization- nor caffeine-induced contraction arterial smooth muscle. The polypeptide is Cysteine-rich venom protein (Demansia vestigiata (Lesser black whip snake)).